The following is a 265-amino-acid chain: Tryptophan synthase alpha chain (265 aa).

Residues E49 and D60 each act as proton acceptor in the active site.

It belongs to the TrpA family. In terms of assembly, tetramer of two alpha and two beta chains.

It carries out the reaction (1S,2R)-1-C-(indol-3-yl)glycerol 3-phosphate + L-serine = D-glyceraldehyde 3-phosphate + L-tryptophan + H2O. The protein operates within amino-acid biosynthesis; L-tryptophan biosynthesis; L-tryptophan from chorismate: step 5/5. In terms of biological role, the alpha subunit is responsible for the aldol cleavage of indoleglycerol phosphate to indole and glyceraldehyde 3-phosphate. The polypeptide is Tryptophan synthase alpha chain (Polynucleobacter necessarius subsp. necessarius (strain STIR1)).